The sequence spans 161 residues: Probable cell wall elongation regulator TseB (161 aa).

The Cytoplasmic portion of the chain corresponds to 1–5; sequence MRKKA. A helical transmembrane segment spans residues 6-26; the sequence is LIFTVIFGIIFLAVLLVSASI. Topologically, residues 27–161 are extracellular; that stretch reads YKSAMAQKEE…TGKILKNITP (135 aa).

Interacts with the penicillin-binding protein PBP2A, a monofunctional transpeptidase.

It is found in the cell membrane. In terms of biological role, required for normal cell shape. Plays an important role in cell wall elongation during exponential phase and spore outgrowth. Probably regulates the activity of the penicillin-binding protein PBP2A through a direct interaction. Not required for PBP2A activity, stability and localization. This chain is Probable cell wall elongation regulator TseB, found in Bacillus subtilis (strain 168).